A 326-amino-acid chain; its full sequence is Probable UDP-3-O-acyl-N-acetylglucosamine deacetylase 2, mitochondrial (326 aa).

The N-terminal 21 residues, 1-21 (MRLPVTVKATKPSFLVIWIRY), are a transit peptide targeting the mitochondrion. The Zn(2+) site is built by H109, H281, and D285.

It belongs to the LpxC family. It depends on Zn(2+) as a cofactor.

The protein resides in the mitochondrion. It catalyses the reaction a UDP-3-O-[(3R)-3-hydroxyacyl]-N-acetyl-alpha-D-glucosamine + H2O = a UDP-3-O-[(3R)-3-hydroxyacyl]-alpha-D-glucosamine + acetate. The protein operates within glycolipid biosynthesis; lipid IV(A) biosynthesis; lipid IV(A) from (3R)-3-hydroxytetradecanoyl-[acyl-carrier-protein] and UDP-N-acetyl-alpha-D-glucosamine: step 2/6. Involved in the biosynthesis of lipid A, a phosphorylated glycolipid that in bacteria anchors the lipopolysaccharide to the outer membrane of the cell. Lipid A-like molecules in plants may serve as structural components of the outer membranes of mitochondria and/or chloroplasts, or may be involved in signal transduction or plant defense responses (Potential). This chain is Probable UDP-3-O-acyl-N-acetylglucosamine deacetylase 2, mitochondrial (LPXC2), found in Arabidopsis thaliana (Mouse-ear cress).